We begin with the raw amino-acid sequence, 399 residues long: Tyrosine--tRNA ligase (399 aa).

Residues P42–H51 carry the 'HIGH' region motif. Residues K226–S230 carry the 'KMSKS' region motif. K229 provides a ligand contact to ATP. Residues I337–V398 form the S4 RNA-binding domain.

It belongs to the class-I aminoacyl-tRNA synthetase family. TyrS type 2 subfamily. In terms of assembly, homodimer.

It is found in the cytoplasm. It carries out the reaction tRNA(Tyr) + L-tyrosine + ATP = L-tyrosyl-tRNA(Tyr) + AMP + diphosphate + H(+). Functionally, catalyzes the attachment of tyrosine to tRNA(Tyr) in a two-step reaction: tyrosine is first activated by ATP to form Tyr-AMP and then transferred to the acceptor end of tRNA(Tyr). The chain is Tyrosine--tRNA ligase from Colwellia psychrerythraea (strain 34H / ATCC BAA-681) (Vibrio psychroerythus).